The primary structure comprises 250 residues: Probable transcriptional regulatory protein Cphamn1_0542 (250 aa).

Belongs to the TACO1 family.

The protein resides in the cytoplasm. This is Probable transcriptional regulatory protein Cphamn1_0542 from Chlorobium phaeobacteroides (strain BS1).